We begin with the raw amino-acid sequence, 599 residues long: Beta-(1--&gt;2)glucan export ATP-binding/permease protein NdvA (599 aa).

One can recognise an ABC transmembrane type-1 domain in the interval 21 to 311 (GWILAVANLL…VVNFINNVLM (291 aa)). 6 helical membrane-spanning segments follow: residues 22–42 (WILA…PILF), 68–88 (LLGA…LVAL), 146–166 (EHFA…YINW), 168–188 (LAIL…LVVH), 254–274 (VITR…GIYL), and 276–296 (QQGL…TLLI). The ABC transporter domain occupies 345 to 579 (VEFQNVSFSY…GGAFAQLARA (235 aa)). Position 378–385 (378–385 (GATGAGKS)) interacts with ATP.

This sequence belongs to the ABC transporter superfamily. Beta-(1--&gt;2)glucan exporter (TC 3.A.1.108.1) family. In terms of assembly, homodimer.

It is found in the cell inner membrane. The catalysed reaction is [(1-&gt;2)-beta-D-glucosyl](n)(in) + ATP + H2O = [(1-&gt;2)-beta-D-glucosyl](n)(out) + ADP + phosphate + H(+). Functionally, involved in beta-(1--&gt;2)glucan export. Transmembrane domains (TMD) form a pore in the inner membrane and the ATP-binding domain (NBD) is responsible for energy generation. This chain is Beta-(1--&gt;2)glucan export ATP-binding/permease protein NdvA, found in Rhodopseudomonas palustris (strain ATCC BAA-98 / CGA009).